The primary structure comprises 70 residues: Protein SlyX homolog (70 aa).

This sequence belongs to the SlyX family.

This Shewanella pealeana (strain ATCC 700345 / ANG-SQ1) protein is Protein SlyX homolog.